Here is a 75-residue protein sequence, read N- to C-terminus: Small ribosomal subunit protein bS21B (75 aa).

Over residues 33 to 52 (RRSYEKPSERRAREKAEAVR) the composition is skewed to basic and acidic residues. Positions 33–75 (RRSYEKPSERRAREKAEAVRRARKLARKQAQREGLLPGKKRAA) are disordered.

The protein belongs to the bacterial ribosomal protein bS21 family.

This Chelativorans sp. (strain BNC1) protein is Small ribosomal subunit protein bS21B.